A 270-amino-acid chain; its full sequence is Thiamine thiazole synthase (270 aa).

Residues A39, 58–59 (EQ), G66, and L130 contribute to the NAD(+) site. At C159 the chain carries 2,3-didehydroalanine (Cys). Residue D161 coordinates NAD(+). 2 residues coordinate Fe cation: D161 and H176. I223 contributes to the NAD(+) binding site. Residue R233 participates in glycine binding.

This sequence belongs to the THI4 family. In terms of assembly, homooctamer; tetramer of dimers. Fe(2+) is required as a cofactor. Post-translationally, during the catalytic reaction, a sulfide is transferred from Cys-159 to a reaction intermediate, generating a dehydroalanine residue.

It carries out the reaction [ADP-thiazole synthase]-L-cysteine + glycine + NAD(+) = [ADP-thiazole synthase]-dehydroalanine + ADP-5-ethyl-4-methylthiazole-2-carboxylate + nicotinamide + 3 H2O + 2 H(+). It participates in cofactor biosynthesis; thiamine diphosphate biosynthesis. In terms of biological role, involved in biosynthesis of the thiamine precursor thiazole. Catalyzes the conversion of NAD and glycine to adenosine diphosphate 5-(2-hydroxyethyl)-4-methylthiazole-2-carboxylic acid (ADT), an adenylated thiazole intermediate. The reaction includes an iron-dependent sulfide transfer from a conserved cysteine residue of the protein to a thiazole intermediate. The enzyme can only undergo a single turnover, which suggests it is a suicide enzyme. This chain is Thiamine thiazole synthase, found in Aeropyrum pernix (strain ATCC 700893 / DSM 11879 / JCM 9820 / NBRC 100138 / K1).